Consider the following 350-residue polypeptide: Small ribosomal subunit biogenesis GTPase RsgA (350 aa).

Polar residues predominate over residues 1-17 (MSKNKLSKGQQRRVNAN). The interval 1-27 (MSKNKLSKGQQRRVNANHQRRLKTSAE) is disordered. The 170-residue stretch at 104-273 (TSVLTRPDFY…VIDSPGVREF (170 aa)) folds into the CP-type G domain. GTP is bound by residues 160 to 163 (NKID) and 214 to 222 (GQSGVGKSS). Positions 297, 302, 304, and 310 each coordinate Zn(2+).

Belongs to the TRAFAC class YlqF/YawG GTPase family. RsgA subfamily. As to quaternary structure, monomer. Associates with 30S ribosomal subunit, binds 16S rRNA. It depends on Zn(2+) as a cofactor.

It localises to the cytoplasm. Its function is as follows. One of several proteins that assist in the late maturation steps of the functional core of the 30S ribosomal subunit. Helps release RbfA from mature subunits. May play a role in the assembly of ribosomal proteins into the subunit. Circularly permuted GTPase that catalyzes slow GTP hydrolysis, GTPase activity is stimulated by the 30S ribosomal subunit. In Salmonella agona (strain SL483), this protein is Small ribosomal subunit biogenesis GTPase RsgA.